Consider the following 146-residue polypeptide: Ribosomal RNA large subunit methyltransferase H (146 aa).

S-adenosyl-L-methionine is bound by residues Leu68, Gly95, and 114–119 (LSSLTF).

The protein belongs to the RNA methyltransferase RlmH family. In terms of assembly, homodimer.

The protein localises to the cytoplasm. It carries out the reaction pseudouridine(1915) in 23S rRNA + S-adenosyl-L-methionine = N(3)-methylpseudouridine(1915) in 23S rRNA + S-adenosyl-L-homocysteine + H(+). Functionally, specifically methylates the pseudouridine at position 1915 (m3Psi1915) in 23S rRNA. In Thermodesulfovibrio yellowstonii (strain ATCC 51303 / DSM 11347 / YP87), this protein is Ribosomal RNA large subunit methyltransferase H.